Reading from the N-terminus, the 1936-residue chain is Trinucleotide repeat-containing gene 6C protein (1936 aa).

Positions 1–31 (MEEKKKKKQEEKKKKEGAQKKAADQKTKVPE) are enriched in basic and acidic residues. Disordered stretches follow at residues 1–160 (MEEK…PTYR), 181–256 (PSIT…NSNG), 366–412 (PQES…AMQT), 439–931 (NGSS…IRRK), 961–1063 (VIQS…VAFG), and 1115–1139 (ESTS…KTSG). The segment covering 34-44 (KTCSSQPQPAG) has biased composition (polar residues). Positions 45-57 (TSTSTSTSTISSS) are enriched in low complexity. A compositionally biased stretch (polar residues) spans 58–71 (NNGKRASASGQQPA). Positions 76 to 88 (LPREVPPRFRQQE) are enriched in basic and acidic residues. 2 stretches are compositionally biased toward polar residues: residues 100-111 (PTGTLTSVSPTQ) and 183-217 (ITGT…GSAQ). The tract at residues 211-1133 (MATGSAQGNF…GNAPKKGLQK (923 aa)) is sufficient for interaction with argonaute family proteins. Positions 218 to 235 (GNFTGHTKKTNGNNGTNG) are enriched in low complexity. Polar residues predominate over residues 366 to 393 (PQESTEPQTSTSQNVSFSAQPQNLNTDG). 3 stretches are compositionally biased toward low complexity: residues 394-408 (PNNT…NPIN), 439-453 (NGSS…SAEG), and 469-480 (GNSNSGFSQGNG). Residues 481 to 498 (DTVNSALSAKQNGSSSAV) are compositionally biased toward polar residues. The residue at position 523 (Arg-523) is an Omega-N-methylarginine. The span at 572–585 (GWESPSVTSQNPTV) shows a compositional bias: polar residues. Residues 594–614 (SWAKAASSGTTASEGSSDGSG) show a composition bias toward low complexity. The segment covering 625-636 (GTGEGRRRDKGI) has biased composition (basic and acidic residues). Residues 654–669 (LSNTGWGQTPVKQNTA) show a composition bias toward polar residues. Over residues 674–684 (ESPRSERKNDN) the composition is skewed to basic and acidic residues. A Phosphoserine modification is found at Ser-675. The segment covering 694 to 718 (TQASNSGGKNDGSIMNSTNTSSVSG) has biased composition (polar residues). 2 stretches are compositionally biased toward low complexity: residues 720 to 730 (VNAPPAAVPAN) and 750 to 772 (SISS…SGAA). Composition is skewed to polar residues over residues 834 to 866 (NRSG…TNWG) and 873 to 888 (PQQN…NVSN). Position 924 is a phosphoserine (Ser-924). Over residues 964 to 982 (SSTTTNTTTTTTTTTSNTT) the composition is skewed to low complexity. At Thr-987 the chain carries Phosphothreonine. The span at 1021–1035 (ENSWGEPSSPSTLVD) shows a compositional bias: polar residues. One can recognise a UBA domain in the interval 1140–1185 (KQDEAWIMSRLIKQLTDMGFPREPAEEALKSNNMNLDQAMSALLEK). Phosphoserine is present on Ser-1218. Disordered stretches follow at residues 1291–1312 (AAQA…NSSQ), 1419–1658 (VKQP…PSSS), 1689–1732 (STWS…PSST), and 1848–1869 (TSSW…GSSH). Positions 1388-1419 (MRQQEQQVARTITNLQQQIQQHQRQLAQALLV) form a coiled coil. Positions 1421–1430 (QPPPPPPPPH) are enriched in pro residues. The silencing domain; interaction with CNOT1 and PAN3 stretch occupies residues 1467 to 1936 (NTFAPYPLAG…PGDLLSGESL (470 aa)). Polar residues predominate over residues 1496 to 1515 (DPSQSQSRLPQWTHPNSMDN). Residues 1578-1624 (KSDSDKISNGSSINWPPEFHPGVPWKGLQNIDPENDPDVTPGSVPTG) are required for interaction with PABPC1. A sufficient for translational repression when tethered to a target mRNA region spans residues 1578–1936 (KSDSDKISNG…PGDLLSGESL (359 aa)). The interval 1588–1606 (SSINWPPEFHPGVPWKGLQ) is PABPC1-interacting motif-2 (PAM2). Over residues 1623–1633 (TGPTINTTIQD) the composition is skewed to polar residues. Low complexity predominate over residues 1641 to 1658 (SGGSSPPSSQNATLPSSS). Over residues 1689–1703 (STWSSGPTSHTQASL) the composition is skewed to polar residues. Residues 1811-1878 (AQKSLHMCVL…HGLVRSDAGH (68 aa)) enclose the RRM domain. The interaction with the CCR4-NOT complex stretch occupies residues 1842 to 1936 (GQALPPTSSW…PGDLLSGESL (95 aa)). Over residues 1848–1865 (TSSWQSSSASSQPRLSAA) the composition is skewed to low complexity.

The protein belongs to the GW182 family. Interacts with one or more of the argonaute family proteins AGO1, AGO2, AGO3 and AGO4. Interacts with PABPC1 and EIF4G1. Interacts with CNOT1; the interaction is direct and mediates the association with the CCR4-NOT complex. Interacts with PAN3; the interaction mediates the association with the PAN complex.

Plays a role in RNA-mediated gene silencing by micro-RNAs (miRNAs). Required for miRNA-dependent translational repression of complementary mRNAs by argonaute family proteins. As scaffoldng protein associates with argonaute proteins bound to partially complementary mRNAs and simultaneously can recruit CCR4-NOT and PAN deadenylase complexes. The protein is Trinucleotide repeat-containing gene 6C protein (TNRC6C) of Homo sapiens (Human).